The following is a 316-amino-acid chain: MEVIKITPRGYCYGVVDAMVIARNAALDPSLPRPIYILGMIVHNKHVTDAFAEEGIITLDGENRLEILEKIDQGTVIFTAHGVSPEVKKRALEKGLVTIDATCPDVTKTHRLIEQKLADGYDIIYIGKKGHPEPEGAVGINPERIHLVETIDDVERLSIHNERIMVTNQTTMSQWDVADIMAKVKEKYPHVEMHKEICLATQLRQEAVAEQAKEADVTIVVGDPRSNNSNRLAQVSEEIAGTKAYRVADVTEIDINWIKDAKKVAVTAGASTPTPITKEVIDFLEQFDPNDPSTWKRERKVPLQKILPKVKTKKEE.

Cysteine 12 contacts [4Fe-4S] cluster. The (2E)-4-hydroxy-3-methylbut-2-enyl diphosphate site is built by histidine 43 and histidine 81. Residues histidine 43 and histidine 81 each contribute to the dimethylallyl diphosphate site. Positions 43 and 81 each coordinate isopentenyl diphosphate. Cysteine 103 contributes to the [4Fe-4S] cluster binding site. Position 131 (histidine 131) interacts with (2E)-4-hydroxy-3-methylbut-2-enyl diphosphate. Residue histidine 131 coordinates dimethylallyl diphosphate. Histidine 131 is an isopentenyl diphosphate binding site. The Proton donor role is filled by glutamate 133. Threonine 170 is a binding site for (2E)-4-hydroxy-3-methylbut-2-enyl diphosphate. A [4Fe-4S] cluster-binding site is contributed by cysteine 198. The (2E)-4-hydroxy-3-methylbut-2-enyl diphosphate site is built by serine 226, asparagine 228, and serine 271. Dimethylallyl diphosphate-binding residues include serine 226, asparagine 228, and serine 271. The isopentenyl diphosphate site is built by serine 226, asparagine 228, and serine 271.

The protein belongs to the IspH family. The cofactor is [4Fe-4S] cluster.

It catalyses the reaction isopentenyl diphosphate + 2 oxidized [2Fe-2S]-[ferredoxin] + H2O = (2E)-4-hydroxy-3-methylbut-2-enyl diphosphate + 2 reduced [2Fe-2S]-[ferredoxin] + 2 H(+). The enzyme catalyses dimethylallyl diphosphate + 2 oxidized [2Fe-2S]-[ferredoxin] + H2O = (2E)-4-hydroxy-3-methylbut-2-enyl diphosphate + 2 reduced [2Fe-2S]-[ferredoxin] + 2 H(+). The protein operates within isoprenoid biosynthesis; dimethylallyl diphosphate biosynthesis; dimethylallyl diphosphate from (2E)-4-hydroxy-3-methylbutenyl diphosphate: step 1/1. Its pathway is isoprenoid biosynthesis; isopentenyl diphosphate biosynthesis via DXP pathway; isopentenyl diphosphate from 1-deoxy-D-xylulose 5-phosphate: step 6/6. Catalyzes the conversion of 1-hydroxy-2-methyl-2-(E)-butenyl 4-diphosphate (HMBPP) into a mixture of isopentenyl diphosphate (IPP) and dimethylallyl diphosphate (DMAPP). Acts in the terminal step of the DOXP/MEP pathway for isoprenoid precursor biosynthesis. The sequence is that of 4-hydroxy-3-methylbut-2-enyl diphosphate reductase from Geobacillus kaustophilus (strain HTA426).